The sequence spans 346 residues: D-alanine--D-alanine ligase (346 aa).

Positions 133–327 (KLYAKSVGVK…TLADQIPLEK (195 aa)) constitute an ATP-grasp domain. 159 to 211 (LRFPCIIKPARLGSSIGISIVKDEKDLEYAKDVGFEFDNDLVVEEFKNNIKEY) contributes to the ATP binding site. 3 residues coordinate Mg(2+): aspartate 284, glutamate 296, and asparagine 298.

This sequence belongs to the D-alanine--D-alanine ligase family. It depends on Mg(2+) as a cofactor. Mn(2+) serves as cofactor.

It is found in the cytoplasm. The catalysed reaction is 2 D-alanine + ATP = D-alanyl-D-alanine + ADP + phosphate + H(+). It functions in the pathway cell wall biogenesis; peptidoglycan biosynthesis. Functionally, cell wall formation. This chain is D-alanine--D-alanine ligase, found in Campylobacter jejuni subsp. doylei (strain ATCC BAA-1458 / RM4099 / 269.97).